Reading from the N-terminus, the 501-residue chain is Bifunctional pantoate ligase/cytidylate kinase (501 aa).

The tract at residues 1 to 264 (MLSTQAELAA…CGTTRLIDHS (264 aa)) is pantoate--beta-alanine ligase. An ATP-binding site is contributed by 25-32 (MGGLHQGH). His-32 serves as the catalytic Proton donor. Gln-55 is a binding site for (R)-pantoate. Residue Gln-55 participates in beta-alanine binding. Residue 144–147 (GEKD) participates in ATP binding. Gln-150 contributes to the (R)-pantoate binding site. Residues Val-173 and 181 to 184 (LSSR) contribute to the ATP site. The interval 265–501 (FLMTRQPLVA…PEEAWPTPAG (237 aa)) is cytidylate kinase.

It in the N-terminal section; belongs to the pantothenate synthetase family. In the C-terminal section; belongs to the cytidylate kinase family. Type 1 subfamily.

It is found in the cytoplasm. It catalyses the reaction (R)-pantoate + beta-alanine + ATP = (R)-pantothenate + AMP + diphosphate + H(+). It carries out the reaction CMP + ATP = CDP + ADP. The enzyme catalyses dCMP + ATP = dCDP + ADP. It functions in the pathway cofactor biosynthesis; (R)-pantothenate biosynthesis; (R)-pantothenate from (R)-pantoate and beta-alanine: step 1/1. Functionally, catalyzes the condensation of pantoate with beta-alanine in an ATP-dependent reaction via a pantoyl-adenylate intermediate. Its function is as follows. Catalyzes the transfer of a phosphate group from ATP to either CMP or dCMP to form CDP or dCDP and ADP, respectively. This is Bifunctional pantoate ligase/cytidylate kinase from Parasynechococcus marenigrum (strain WH8102).